The chain runs to 515 residues: 1-pyrroline-5-carboxylate dehydrogenase (515 aa).

Active-site residues include Glu-286 and Cys-320.

The protein belongs to the aldehyde dehydrogenase family. RocA subfamily.

It carries out the reaction L-glutamate 5-semialdehyde + NAD(+) + H2O = L-glutamate + NADH + 2 H(+). It functions in the pathway amino-acid degradation; L-proline degradation into L-glutamate; L-glutamate from L-proline: step 2/2. In Anoxybacillus flavithermus (strain DSM 21510 / WK1), this protein is 1-pyrroline-5-carboxylate dehydrogenase.